Consider the following 653-residue polypeptide: tRNA-guanine(15) transglycosylase (653 aa).

Catalysis depends on D91, which acts as the Nucleophile. D126 and A193 together coordinate substrate. Positions 276, 278, and 281 each coordinate Zn(2+). A PUA domain is found at A578 to F653.

The protein belongs to the archaeosine tRNA-ribosyltransferase family. Requires Zn(2+) as cofactor.

It catalyses the reaction guanosine(15) in tRNA + 7-cyano-7-deazaguanine = 7-cyano-7-carbaguanosine(15) in tRNA + guanine. The protein operates within tRNA modification; archaeosine-tRNA biosynthesis. Functionally, exchanges the guanine residue with 7-cyano-7-deazaguanine (preQ0) at position 15 in the dihydrouridine loop (D-loop) of archaeal tRNAs. The chain is tRNA-guanine(15) transglycosylase from Methanothermobacter thermautotrophicus (strain ATCC 29096 / DSM 1053 / JCM 10044 / NBRC 100330 / Delta H) (Methanobacterium thermoautotrophicum).